Consider the following 157-residue polypeptide: UPF0179 protein Mhun_1135 (157 aa).

This sequence belongs to the UPF0179 family.

The sequence is that of UPF0179 protein Mhun_1135 from Methanospirillum hungatei JF-1 (strain ATCC 27890 / DSM 864 / NBRC 100397 / JF-1).